A 506-amino-acid chain; its full sequence is Aldehyde dehydrogenase [NAD(P)+] 2 (506 aa).

Catalysis depends on Glu-268, which acts as the Proton acceptor. Cys-302 functions as the Nucleophile in the catalytic mechanism.

It belongs to the aldehyde dehydrogenase family.

Its subcellular location is the cytoplasm. It catalyses the reaction an aldehyde + NAD(+) + H2O = a carboxylate + NADH + 2 H(+). The catalysed reaction is 3-aminopropanal + NAD(+) + H2O = beta-alanine + NADH + 2 H(+). In terms of biological role, cytoplasmic aldehyde dehydrogenase involved in ethanol oxidation. Involved in pantothenic acid production through the conversion of 3-aminopropanal to beta-alanine, an intermediate in pantothenic acid (vitamin B5) and coenzyme A (CoA) biosynthesis. The polypeptide is Aldehyde dehydrogenase [NAD(P)+] 2 (ALD3) (Saccharomyces cerevisiae (strain ATCC 204508 / S288c) (Baker's yeast)).